The primary structure comprises 172 residues: Xanthine-guanine phosphoribosyltransferase (172 aa).

Residues 47 to 48 and 106 to 114 contribute to the 5-phospho-alpha-D-ribose 1-diphosphate site; these read RG and DDLVDTGKT. Asp107 provides a ligand contact to Mg(2+). Guanine-binding residues include Asp110 and Ile153. Xanthine is bound by residues Asp110 and Ile153. Residues 110 to 114 and 152 to 153 contribute to the GMP site; these read DTGKT and WI.

This sequence belongs to the purine/pyrimidine phosphoribosyltransferase family. XGPT subfamily. In terms of assembly, homotetramer. Requires Mg(2+) as cofactor.

The protein resides in the cell inner membrane. It catalyses the reaction GMP + diphosphate = guanine + 5-phospho-alpha-D-ribose 1-diphosphate. The catalysed reaction is XMP + diphosphate = xanthine + 5-phospho-alpha-D-ribose 1-diphosphate. It carries out the reaction IMP + diphosphate = hypoxanthine + 5-phospho-alpha-D-ribose 1-diphosphate. It participates in purine metabolism; GMP biosynthesis via salvage pathway; GMP from guanine: step 1/1. The protein operates within purine metabolism; XMP biosynthesis via salvage pathway; XMP from xanthine: step 1/1. Purine salvage pathway enzyme that catalyzes the transfer of the ribosyl-5-phosphate group from 5-phospho-alpha-D-ribose 1-diphosphate (PRPP) to the N9 position of the 6-oxopurines guanine and xanthine to form the corresponding ribonucleotides GMP (guanosine 5'-monophosphate) and XMP (xanthosine 5'-monophosphate), with the release of PPi. To a lesser extent, also acts on hypoxanthine. The protein is Xanthine-guanine phosphoribosyltransferase of Rhodopseudomonas palustris (strain HaA2).